A 226-amino-acid chain; its full sequence is Transmembrane gamma-carboxyglutamic acid protein 4 (226 aa).

The first 17 residues, 1–17 (MFPLLIVLSQLPRLTLA), serve as a signal peptide directing secretion. The propeptide occupies 18 to 49 (VPHCIRSLKDSEHAPEEVFASKEAANIFMHRR). At 50-113 (LLNNRFDLEL…GSDVNKEKID (64 aa)) the chain is on the extracellular side. One can recognise a Gla domain in the interval 52-98 (NNRFDLELFTPGDLERECYEEFCSYEEAREILGDDENTIKFWQTYSI). Residues cysteine 69 and cysteine 74 are joined by a disulfide bond. Glutamate 72 is modified (4-carboxyglutamate). A helical membrane pass occupies residues 114-134 (VMSLLTGLIVAGVFLVIFGLV). Over 135–226 (GYYVCLTKCK…FKKSMSLPSH (92 aa)) the chain is Cytoplasmic. Serine 164 is subject to Phosphoserine. The LPXY motif; mediates binding to WW domain-containing proteins motif lies at 186–189 (LPSY). Positions 204-207 (PPPY) match the PPXY motif; mediates binding to WW domain-containing proteins motif.

This sequence belongs to the commissureless family. Interacts (via cytoplasmic domain) with WW domain-containing proteins MAGI1, MAGI3, NEDD4, NEDD4L, WWTR1/TAZ and YAP1. Gamma-carboxyglutamate residues are formed by vitamin K dependent carboxylation. These residues are essential for the binding of calcium.

The protein localises to the endoplasmic reticulum-Golgi intermediate compartment membrane. It localises to the cell membrane. Its function is as follows. May control axon guidance across the CNS. Prevents the delivery of ROBO1 at the cell surface and down-regulates its expression. The sequence is that of Transmembrane gamma-carboxyglutamic acid protein 4 (Prrg4) from Mus musculus (Mouse).